We begin with the raw amino-acid sequence, 490 residues long: UDP-N-acetylmuramate--L-alanine ligase (490 aa).

Residue 122 to 128 coordinates ATP; that stretch reads GTHGKTS.

The protein belongs to the MurCDEF family.

The protein resides in the cytoplasm. It catalyses the reaction UDP-N-acetyl-alpha-D-muramate + L-alanine + ATP = UDP-N-acetyl-alpha-D-muramoyl-L-alanine + ADP + phosphate + H(+). It functions in the pathway cell wall biogenesis; peptidoglycan biosynthesis. Cell wall formation. The polypeptide is UDP-N-acetylmuramate--L-alanine ligase (Mycobacteroides abscessus (strain ATCC 19977 / DSM 44196 / CCUG 20993 / CIP 104536 / JCM 13569 / NCTC 13031 / TMC 1543 / L948) (Mycobacterium abscessus)).